A 350-amino-acid chain; its full sequence is Phosphotriesterase-related protein (350 aa).

A divalent metal cation is bound by residues His22, His24, Glu169, His201, His230, and Asp298.

The protein belongs to the metallo-dependent hydrolases superfamily. Phosphotriesterase family. A divalent metal cation is required as a cofactor.

In Drosophila mojavensis (Fruit fly), this protein is Phosphotriesterase-related protein.